Here is a 424-residue protein sequence, read N- to C-terminus: MDSAPSGLTLTVIILSIILLAFISTVVSAYETAITSLTPYRWKNYIKTNNKQDKLSTKIINHFQNHYSSCLITILITNNIVAIMVSNILFLALEQTIKNELLSSVLNLVVSGVLIVSFCEILPKTLGRINVIRTLVLFAYLVYFFYLIFWPITKLTSLILKKYENPLPVSRKDVYYFIDEIEQNGLFSKEDSLLIKKTLIFDQVLVKKVMIKWKKVAYCYLNDSINLIAKQFLQRQFSRMPVVDKTTNKIVGFIHLKDFFTAKEANPKSLDLNQLLYPVVLVQDSTPIKQALRQMRLNRAHLAVVNDKHEKTIGIVSMEDIIEELVGEIYDEHDDIQPIQVLDENVWLVLPNVKAAYFFNKWIKPDLVKSKNITIQHYLASLDNDSFACQNKLDTPLFSVEVIADSEDKTKILYEIRKKSDVIA.

In terms of domain architecture, CNNM transmembrane spans 6–191 (SGLTLTVIIL…EQNGLFSKED (186 aa)). The next 4 membrane-spanning stretches (helical) occupy residues 7 to 27 (GLTL…STVV), 71 to 91 (LITI…ILFL), 101 to 121 (LLSS…FCEI), and 135 to 155 (LVLF…ITKL). 2 CBS domains span residues 210–270 (MIKW…PKSL) and 272–332 (LNQL…IYDE).

It belongs to the UPF0053 family.

It localises to the cell membrane. The chain is UPF0053 protein MG146 from Mycoplasma genitalium (strain ATCC 33530 / DSM 19775 / NCTC 10195 / G37) (Mycoplasmoides genitalium).